Here is a 178-residue protein sequence, read N- to C-terminus: MSRIGKKPVVIPSGVTINVAAGNKVEVKGAKATLSKTFSTDVTFSVADNVATITLNNNSKNAVAQSGTARAILSNMVEGVSKGFERKLKIIGVGYRAKAQGNELNLTLGFSHPVVYKLPQGITAETPAPTEIILKGADKELLGKVASEIREYRKPEPYKGKGVRYEDEYVAKKEAKKK.

It belongs to the universal ribosomal protein uL6 family. Part of the 50S ribosomal subunit.

Functionally, this protein binds to the 23S rRNA, and is important in its secondary structure. It is located near the subunit interface in the base of the L7/L12 stalk, and near the tRNA binding site of the peptidyltransferase center. This Francisella tularensis subsp. tularensis (strain WY96-3418) protein is Large ribosomal subunit protein uL6.